We begin with the raw amino-acid sequence, 278 residues long: SLAM family member 8 (278 aa).

Positions 1 to 20 (MWSLWSLLLFEALLPVVVVS) are cleaved as a signal peptide. Residues 21–231 (VQVLSKVGDS…AASGKASYKD (211 aa)) lie on the Extracellular side of the membrane. N-linked (GlcNAc...) asparagine glycosylation is found at Asn-83 and Asn-154. The region spanning 126 to 213 (PEVQVFTAAA…PVSWDMTTVT (88 aa)) is the Ig-like C2-type domain. Cys-150 and Cys-199 form a disulfide bridge. Residues 232–252 (VLLVVVPITLFLILAGLFGAW) form a helical membrane-spanning segment. The Cytoplasmic segment spans residues 253 to 278 (HHGLCSGKKKDACTDGVLPETENALV).

The protein localises to the membrane. Its function is as follows. May play a role in B-lineage commitment and/or modulation of signaling through the B-cell receptor. The chain is SLAM family member 8 (Slamf8) from Mus musculus (Mouse).